Consider the following 337-residue polypeptide: Holliday junction branch migration complex subunit RuvB (337 aa).

Residues 1-182 are large ATPase domain (RuvB-L); it reads MSEEKSVLRD…FGAVFRLSYY (182 aa). ATP contacts are provided by residues Leu-21, Arg-22, Gly-63, Lys-66, Thr-67, Thr-68, 129-131, Arg-172, Tyr-182, and Arg-219; that span reads EDY. A Mg(2+)-binding site is contributed by Thr-67. Residues 183–253 are small ATPAse domain (RuvB-S); the sequence is KLEEIKQIVR…ITQLALTKLG (71 aa). The head domain (RuvB-H) stretch occupies residues 256-337; the sequence is HKGLDASDYL…VKYYKGLLDN (82 aa). DNA-binding residues include Arg-311 and Arg-316.

The protein belongs to the RuvB family. As to quaternary structure, homohexamer. Forms an RuvA(8)-RuvB(12)-Holliday junction (HJ) complex. HJ DNA is sandwiched between 2 RuvA tetramers; dsDNA enters through RuvA and exits via RuvB. An RuvB hexamer assembles on each DNA strand where it exits the tetramer. Each RuvB hexamer is contacted by two RuvA subunits (via domain III) on 2 adjacent RuvB subunits; this complex drives branch migration. In the full resolvosome a probable DNA-RuvA(4)-RuvB(12)-RuvC(2) complex forms which resolves the HJ.

It is found in the cytoplasm. It carries out the reaction ATP + H2O = ADP + phosphate + H(+). Functionally, the RuvA-RuvB-RuvC complex processes Holliday junction (HJ) DNA during genetic recombination and DNA repair, while the RuvA-RuvB complex plays an important role in the rescue of blocked DNA replication forks via replication fork reversal (RFR). RuvA specifically binds to HJ cruciform DNA, conferring on it an open structure. The RuvB hexamer acts as an ATP-dependent pump, pulling dsDNA into and through the RuvAB complex. RuvB forms 2 homohexamers on either side of HJ DNA bound by 1 or 2 RuvA tetramers; 4 subunits per hexamer contact DNA at a time. Coordinated motions by a converter formed by DNA-disengaged RuvB subunits stimulates ATP hydrolysis and nucleotide exchange. Immobilization of the converter enables RuvB to convert the ATP-contained energy into a lever motion, pulling 2 nucleotides of DNA out of the RuvA tetramer per ATP hydrolyzed, thus driving DNA branch migration. The RuvB motors rotate together with the DNA substrate, which together with the progressing nucleotide cycle form the mechanistic basis for DNA recombination by continuous HJ branch migration. Branch migration allows RuvC to scan DNA until it finds its consensus sequence, where it cleaves and resolves cruciform DNA. The sequence is that of Holliday junction branch migration complex subunit RuvB from Acholeplasma laidlawii (strain PG-8A).